The chain runs to 371 residues: MSL complex subunit 3B (371 aa).

Disordered stretches follow at residues 1 to 44 and 160 to 229; these read MATL…READ and EERA…SPQA. Residues 8-44 are compositionally biased toward basic and acidic residues; that stretch reads PKDDGEGKDEGGSDRGDGDPKPKGKKEVEAHTRREAD. The MRG domain occupies 44–367; sequence DERAVRIPIP…CEAHYSSKNP (324 aa). Residues 206–216 show a composition bias toward basic residues; the sequence is APRRSTRHSTH.

The protein localises to the nucleus. Probable non-catalytic component of the MSL histone acetyltransferase complex, a multiprotein complex that mediates the majority of histone H4 acetylation at 'Lys-16' (H4K16ac), an epigenetic mark that prevents chromatin compaction. The chain is MSL complex subunit 3B from Rattus norvegicus (Rat).